Consider the following 526-residue polypeptide: Peptide chain release factor 3 (526 aa).

Residues aspartate 9–leucine 277 form the tr-type G domain. GTP-binding positions include serine 18–threonine 25, aspartate 86–histidine 90, and asparagine 140–aspartate 143.

This sequence belongs to the TRAFAC class translation factor GTPase superfamily. Classic translation factor GTPase family. PrfC subfamily.

It is found in the cytoplasm. Its function is as follows. Increases the formation of ribosomal termination complexes and stimulates activities of RF-1 and RF-2. It binds guanine nucleotides and has strong preference for UGA stop codons. It may interact directly with the ribosome. The stimulation of RF-1 and RF-2 is significantly reduced by GTP and GDP, but not by GMP. In Shewanella putrefaciens (strain CN-32 / ATCC BAA-453), this protein is Peptide chain release factor 3.